A 294-amino-acid polypeptide reads, in one-letter code: Phosphoribosylaminoimidazole-succinocarboxamide synthase (294 aa).

This sequence belongs to the SAICAR synthetase family.

It carries out the reaction 5-amino-1-(5-phospho-D-ribosyl)imidazole-4-carboxylate + L-aspartate + ATP = (2S)-2-[5-amino-1-(5-phospho-beta-D-ribosyl)imidazole-4-carboxamido]succinate + ADP + phosphate + 2 H(+). Its pathway is purine metabolism; IMP biosynthesis via de novo pathway; 5-amino-1-(5-phospho-D-ribosyl)imidazole-4-carboxamide from 5-amino-1-(5-phospho-D-ribosyl)imidazole-4-carboxylate: step 1/2. This chain is Phosphoribosylaminoimidazole-succinocarboxamide synthase, found in Rhodococcus jostii (strain RHA1).